Consider the following 1171-residue polypeptide: DNA-directed RNA polymerase subunit beta (1171 aa).

The protein belongs to the RNA polymerase beta chain family. In terms of assembly, the RNAP catalytic core consists of 2 alpha, 1 beta, 1 beta' and 1 omega subunit. When a sigma factor is associated with the core the holoenzyme is formed, which can initiate transcription.

The enzyme catalyses RNA(n) + a ribonucleoside 5'-triphosphate = RNA(n+1) + diphosphate. Its function is as follows. DNA-dependent RNA polymerase catalyzes the transcription of DNA into RNA using the four ribonucleoside triphosphates as substrates. This chain is DNA-directed RNA polymerase subunit beta, found in Kineococcus radiotolerans (strain ATCC BAA-149 / DSM 14245 / SRS30216).